The chain runs to 154 residues: 6,7-dimethyl-8-ribityllumazine synthase (154 aa).

5-amino-6-(D-ribitylamino)uracil-binding positions include Phe23, 57–59 (AFE), and 81–83 (AII). Residue 86-87 (ST) coordinates (2S)-2-hydroxy-3-oxobutyl phosphate. The active-site Proton donor is His89. Phe114 serves as a coordination point for 5-amino-6-(D-ribitylamino)uracil. A (2S)-2-hydroxy-3-oxobutyl phosphate-binding site is contributed by Arg128.

This sequence belongs to the DMRL synthase family.

It carries out the reaction (2S)-2-hydroxy-3-oxobutyl phosphate + 5-amino-6-(D-ribitylamino)uracil = 6,7-dimethyl-8-(1-D-ribityl)lumazine + phosphate + 2 H2O + H(+). It participates in cofactor biosynthesis; riboflavin biosynthesis; riboflavin from 2-hydroxy-3-oxobutyl phosphate and 5-amino-6-(D-ribitylamino)uracil: step 1/2. In terms of biological role, catalyzes the formation of 6,7-dimethyl-8-ribityllumazine by condensation of 5-amino-6-(D-ribitylamino)uracil with 3,4-dihydroxy-2-butanone 4-phosphate. This is the penultimate step in the biosynthesis of riboflavin. The polypeptide is 6,7-dimethyl-8-ribityllumazine synthase (Nitratiruptor sp. (strain SB155-2)).